A 101-amino-acid polypeptide reads, in one-letter code: Acylphosphatase (101 aa).

An Acylphosphatase-like domain is found at 11 to 99; it reads SWLVKAIGRV…PRLNRFDRLP (89 aa). Active-site residues include R26 and N44.

Belongs to the acylphosphatase family.

It carries out the reaction an acyl phosphate + H2O = a carboxylate + phosphate + H(+). The sequence is that of Acylphosphatase (acyP) from Polaromonas naphthalenivorans (strain CJ2).